A 335-amino-acid polypeptide reads, in one-letter code: MPPQKENHRTLNKMKTNLFLFLIFSLLLSLSSAEQCGRQAGGALCPNGLCCSEFGWCGNTEPYCKQPGCQSQCTPGGTPPGPTGDLSGIISSSQFDDMLKHRNDAACPARGFYTYNAFITAAKSFPGFGTTGDTATRKKEVAAFFGQTSHETTGGWATAPDGPYSWGYCFKQEQNPASDYCEPSATWPCASGKRYYGRGPMQLSWNYNYGLCGRAIGVDLLNNPDLVANDAVIAFKAAIWFWMTAQPPKPSCHAVIAGQWQPSDADRAAGRLPGYGVITNIINGGLECGRGQDGRVADRIGFYQRYCNIFGVNPGGNLDCYNQRSFVNGLLEAAI.

An N-terminal signal peptide occupies residues 1 to 33; it reads MPPQKENHRTLNKMKTNLFLFLIFSLLLSLSSA. The 42-residue stretch at 34–75 folds into the Chitin-binding type-1 domain; the sequence is EQCGRQAGGALCPNGLCCSEFGWCGNTEPYCKQPGCQSQCTP. 7 cysteine pairs are disulfide-bonded: Cys36-Cys51, Cys45-Cys57, Cys50-Cys64, Cys69-Cys73, Cys107-Cys169, Cys181-Cys189, and Cys288-Cys320. Glu151 acts as the Proton donor in catalysis. Positions 329–335 are cleaved as a propeptide — removed in mature form; sequence GLLEAAI. The short motif at 329-335 is the Vacuolar targeting signal element; it reads GLLEAAI.

It belongs to the glycosyl hydrolase 19 family. Chitinase class I subfamily. High constitutive level in roots with lower levels in leaves and flowering shoots.

The protein resides in the vacuole. The catalysed reaction is Random endo-hydrolysis of N-acetyl-beta-D-glucosaminide (1-&gt;4)-beta-linkages in chitin and chitodextrins.. Defense against chitin-containing fungal pathogens. Seems particularly implicated in resistance to jasmonate-inducing pathogens such as A.brassicicola. In vitro antifungal activity against T.reesei, but not against A.solani, F.oxysporum, S.sclerotiorum, G.graminis and P.megasperma. The sequence is that of Basic endochitinase B (CHI-B) from Arabidopsis thaliana (Mouse-ear cress).